Consider the following 441-residue polypeptide: Transcriptional regulatory protein ZraR (441 aa).

The 115-residue stretch at 7–121 (DILVVDDDIS…NLQATLEKAL (115 aa)) folds into the Response regulatory domain. Position 56 is a 4-aspartylphosphate (Asp-56). In terms of domain architecture, Sigma-54 factor interaction spans 141-370 (MVGKSPAMQH…LENAVERAVV (230 aa)). Gly-172, Thr-173, Arg-329, and Arg-359 together coordinate ATP. The segment at residues 421 to 440 (KTEAARQLGITRKTLLAKLS) is a DNA-binding region (H-T-H motif).

In terms of processing, phosphorylated by ZraS.

It is found in the cytoplasm. With respect to regulation, activity of the ZraS/ZraR two-component system is repressed by the zinc-bound form of ZraP, which probably interacts with the periplasmic region of ZraS. Its function is as follows. Part of the Zra signaling pathway, an envelope stress response (ESR) system composed of the periplasmic accessory protein ZraP, the histidine kinase ZraS and the transcriptional regulator ZraR. The ZraPSR system contributes to antibiotic resistance and is important for membrane integrity in the presence of membrane-targeting biocides. ZraR is a member of the two-component regulatory system ZraS/ZraR. When activated by ZraS, acts in conjunction with sigma-54 to regulate the expression of zraP in the presence of high Zn(2+) or Pb(2+) concentrations. Also positively autoregulates the expression of the zraSR operon. The chain is Transcriptional regulatory protein ZraR (zraR) from Escherichia coli O157:H7.